The following is a 315-amino-acid chain: Cysteine proteinase 2 (315 aa).

A signal peptide spans 1-13 (MFAFICLLAIASA). A propeptide spans 14–93 (IDFNTWASKN…NGQVKYLNIQ (80 aa)) (activation peptide). 2 disulfides stabilise this stretch: cysteine 115/cysteine 161 and cysteine 152/cysteine 193. Cysteine 118 is a catalytic residue. Active-site residues include histidine 259 and asparagine 279.

Belongs to the peptidase C1 family. Interacts with cysteine protease inhibitor ICP1. Interacts with cysteine protease inhibitor ICP2.

The protein localises to the cell membrane. Its subcellular location is the cytoplasmic vesicle. It is found in the phagosome. The protein resides in the secreted. The catalysed reaction is Hydrolysis of proteins, including basement membrane collagen and azocasein. Preferential cleavage: Arg-Arg-|-Xaa in small molecule substrates including Z-Arg-Arg-|-NHMec.. Its activity is regulated as follows. Inhibited by cysteine protease inhibitors ICP1 and ICP2. Inhibited by leupeptin and such inhibitors of cysteine proteinases as L-transepoxysuccinyl-L-leucylamido-(4-guanidino)butane, peptidyldiazomethanes, iodoacetic acid and chicken cystatin. Cysteine protease which degrades matrix proteins such as collagen, laminin and fibronectin and thus is involved in the destruction of human tissue. Can abolish adhesion. May play an important role in pathogenicity. The protein is Cysteine proteinase 2 of Entamoeba histolytica (strain ATCC 30459 / HM-1:IMSS / ABRM).